Here is a 475-residue protein sequence, read N- to C-terminus: Ribulose bisphosphate carboxylase large chain (475 aa).

The propeptide occupies 1-2 (MS). Pro3 is subject to N-acetylproline. Lys14 carries the post-translational modification N6,N6,N6-trimethyllysine. Substrate contacts are provided by Asn123 and Thr173. The active-site Proton acceptor is Lys175. A substrate-binding site is contributed by Lys177. Mg(2+) contacts are provided by Lys201, Asp203, and Glu204. Lys201 is subject to N6-carboxylysine. His294 serves as the catalytic Proton acceptor. Substrate contacts are provided by Arg295, His327, and Ser379.

The protein belongs to the RuBisCO large chain family. Type I subfamily. In terms of assembly, heterohexadecamer of 8 large chains and 8 small chains; disulfide-linked. The disulfide link is formed within the large subunit homodimers. Mg(2+) serves as cofactor. Post-translationally, the disulfide bond which can form in the large chain dimeric partners within the hexadecamer appears to be associated with oxidative stress and protein turnover.

The protein resides in the plastid. The protein localises to the chloroplast. The catalysed reaction is 2 (2R)-3-phosphoglycerate + 2 H(+) = D-ribulose 1,5-bisphosphate + CO2 + H2O. The enzyme catalyses D-ribulose 1,5-bisphosphate + O2 = 2-phosphoglycolate + (2R)-3-phosphoglycerate + 2 H(+). Its function is as follows. RuBisCO catalyzes two reactions: the carboxylation of D-ribulose 1,5-bisphosphate, the primary event in carbon dioxide fixation, as well as the oxidative fragmentation of the pentose substrate in the photorespiration process. Both reactions occur simultaneously and in competition at the same active site. This is Ribulose bisphosphate carboxylase large chain from Corylus cornuta (Beaked hazel).